The chain runs to 78 residues: Large ribosomal subunit protein bL28 (78 aa).

Belongs to the bacterial ribosomal protein bL28 family.

The polypeptide is Large ribosomal subunit protein bL28 (Prochlorococcus marinus (strain MIT 9215)).